The primary structure comprises 512 residues: Nephrocan (512 aa).

An N-terminal signal peptide occupies residues 1-19; sequence MHPLWAFLLGLSLTNGLSA. The LRRNT domain occupies 20–44; sequence NCPGRCSCDSMQSVQCYRLMELPSG. LRR repeat units lie at residues 45-69, 71-93, 94-117, 119-138, 139-162, 164-185, 186-208, 210-232, 234-253, 254-276, 277-299, 301-320, 321-344, 346-371, 373-389, 390-413, and 415-442; these read IPSTTKRLYISHSRIQHLQLSNFTG, LALEDFILLASGTESIENDTFKT, LSTLKTLELWKNKLRQVPSALPAN, EVLKLNDNAICALRGSEFEG, LKNLKVLELKNNLISSLSPSMLSP, ASLQSLMVDGNNIESVVGPLSL, PHLKYMSMENNQLHLIPGNVFTS, QNLQFLSFSGNFLTKIPINLPKS, LSLKMERNQLKVVRFRDMKH, LENLSHLYLSENFLSSIDGAQQL, TNLTTLEVSQNQLQMLPPRLPSR, QKLDCSSNFIQRVTAPEFQD, LRDLKHLFLDNNVVSLFEAGALQR, SQLSNLALEQNLLLSIPLRLPKTLAR, DLKGNAIQDMAERELRD, LKQLQVLNLRNNRISALDFKALEG, and PRLRHLYLDGNPWNCTCSLLRAREVLKA. A glycan (N-linked (GlcNAc...) asparagine) is linked at Asn66. A compositionally biased stretch (basic and acidic residues) spans 474-484; that stretch reads EHHLQQSEKSK. Residues 474–512 form a disordered region; the sequence is EHHLQQSEKSKETKKKPKPEDSSSIRLNMDDDDDDYEID. Residues 503–512 show a composition bias toward acidic residues; the sequence is DDDDDDYEID.

Belongs to the small leucine-rich proteoglycan (SLRP) family. Post-translationally, N-glycosylated. Expressed at highest levels in the kidney, where it is primarily detected in the epithelial cells of distal tubules and collecting ducts, and more weakly in proximal epithelial cells. Expressed at lower levels in heart and lung (at protein level). Detected in skeletal muscle.

The protein localises to the secreted. May inhibit TGF-beta signaling. This is Nephrocan from Mus musculus (Mouse).